Here is an 890-residue protein sequence, read N- to C-terminus: Phosphotransferase RcsD (890 aa).

At 1–21 (MRQKETTATTRFSLLPGSITR) the chain is on the cytoplasmic side. A helical transmembrane segment spans residues 22–42 (FFLLLIIVLLVTMGVMVQSAV). Residues 43 to 308 (NAWLKDKSYQ…GTLLLDTLQN (266 aa)) lie on the Periplasmic side of the membrane. A helical transmembrane segment spans residues 309–329 (ILLPLLLNIGLLALALFGYTT). Residues 330-890 (FRHFSSRSTE…DIDSYVKSLL (561 aa)) lie on the Cytoplasmic side of the membrane. A histidine-like kinase region spans residues 468 to 678 (NIGDALKEPA…RYSVHIKMLA (211 aa)). The HPt domain occupies 803 to 890 (AQLHASGYYA…DIDSYVKSLL (88 aa)). His-842 is subject to Phosphohistidine.

It belongs to the RcsD family. In terms of assembly, interacts with RcsC and RcsB. Has a higher affinity for RcsB than for RcsC. In terms of processing, phosphorylated by RcsC.

It localises to the cell inner membrane. Its function is as follows. Component of the Rcs signaling system, which controls transcription of numerous genes. RcsD is a phosphotransfer intermediate between the sensor kinase RcsC and the response regulator RcsB. It acquires a phosphoryl group from RcsC and transfers it to RcsB. The system controls expression of genes involved in colanic acid capsule synthesis, biofilm formation and cell division. The sequence is that of Phosphotransferase RcsD from Escherichia coli (strain K12).